The following is a 438-amino-acid chain: Trigger factor (438 aa).

Residues 163–248 (GDIITIDYEG…VKEIKRKELA (86 aa)) form the PPIase FKBP-type domain.

This sequence belongs to the FKBP-type PPIase family. Tig subfamily.

The protein resides in the cytoplasm. The enzyme catalyses [protein]-peptidylproline (omega=180) = [protein]-peptidylproline (omega=0). In terms of biological role, involved in protein export. Acts as a chaperone by maintaining the newly synthesized protein in an open conformation. Functions as a peptidyl-prolyl cis-trans isomerase. The polypeptide is Trigger factor (Desulforudis audaxviator (strain MP104C)).